The following is a 298-amino-acid chain: MATH domain and coiled-coil domain-containing protein At3g58280 (298 aa).

An MATH domain is found at 9-128; the sequence is KKTFGWVIKD…NGEITIIAEV (120 aa). Positions 240-288 form a coiled coil; sequence NLDWLRQKFDQALEKQIAYDTRIGELEKQVKKRKLAVTELEADLEKEKA.

This is MATH domain and coiled-coil domain-containing protein At3g58280 from Arabidopsis thaliana (Mouse-ear cress).